We begin with the raw amino-acid sequence, 329 residues long: AUGMIN subunit 7 (329 aa).

Positions 169 to 197 (DVSELETKLSEQAKILSNLQQKVDDLAAK) form a coiled coil.

Part of the augmin complex composed of 8 subunits. The complex acts on microtubules and interacts with gamma-tubulin in spindles and the phragmoplast.

Its subcellular location is the cytoplasm. The protein resides in the cytoskeleton. The protein localises to the spindle. It localises to the phragmoplast. In terms of biological role, contributes to the assembly of the acentrosomal spindle and phragmoplast microtubule arrays as part of the augmin complex. Regulates the association of gamma-tubulin with the spindle and phragmoplast microtubules. This is AUGMIN subunit 7 from Arabidopsis thaliana (Mouse-ear cress).